Here is a 234-residue protein sequence, read N- to C-terminus: Leucyl/phenylalanyl-tRNA--protein transferase (234 aa).

This sequence belongs to the L/F-transferase family.

Its subcellular location is the cytoplasm. It catalyses the reaction N-terminal L-lysyl-[protein] + L-leucyl-tRNA(Leu) = N-terminal L-leucyl-L-lysyl-[protein] + tRNA(Leu) + H(+). The catalysed reaction is N-terminal L-arginyl-[protein] + L-leucyl-tRNA(Leu) = N-terminal L-leucyl-L-arginyl-[protein] + tRNA(Leu) + H(+). The enzyme catalyses L-phenylalanyl-tRNA(Phe) + an N-terminal L-alpha-aminoacyl-[protein] = an N-terminal L-phenylalanyl-L-alpha-aminoacyl-[protein] + tRNA(Phe). Functionally, functions in the N-end rule pathway of protein degradation where it conjugates Leu, Phe and, less efficiently, Met from aminoacyl-tRNAs to the N-termini of proteins containing an N-terminal arginine or lysine. This Myxococcus xanthus (strain DK1622) protein is Leucyl/phenylalanyl-tRNA--protein transferase.